We begin with the raw amino-acid sequence, 253 residues long: Triosephosphate isomerase (253 aa).

9–11 (NWK) provides a ligand contact to substrate. The active-site Electrophile is His95. Residue Glu167 is the Proton acceptor of the active site. Substrate-binding positions include Gly173, Ser213, and 234–235 (GG). Ser213 carries the phosphoserine modification.

This sequence belongs to the triosephosphate isomerase family. Homodimer.

It is found in the cytoplasm. The enzyme catalyses D-glyceraldehyde 3-phosphate = dihydroxyacetone phosphate. It participates in carbohydrate biosynthesis; gluconeogenesis. It functions in the pathway carbohydrate degradation; glycolysis; D-glyceraldehyde 3-phosphate from glycerone phosphate: step 1/1. Functionally, involved in the gluconeogenesis. Catalyzes stereospecifically the conversion of dihydroxyacetone phosphate (DHAP) to D-glyceraldehyde-3-phosphate (G3P). This chain is Triosephosphate isomerase, found in Bacillus subtilis (strain 168).